Here is an 89-residue protein sequence, read N- to C-terminus: Acylphosphatase (89 aa).

Positions 4 to 89 constitute an Acylphosphatase-like domain; it reads CVRCLIAGRV…IPEIQMFEVR (86 aa). Residues arginine 19 and asparagine 37 contribute to the active site.

This sequence belongs to the acylphosphatase family.

It carries out the reaction an acyl phosphate + H2O = a carboxylate + phosphate + H(+). In Nitrosococcus oceani (strain ATCC 19707 / BCRC 17464 / JCM 30415 / NCIMB 11848 / C-107), this protein is Acylphosphatase (acyP).